A 152-amino-acid polypeptide reads, in one-letter code: SsrA-binding protein (152 aa).

Positions lysine 122–aspartate 152 are disordered. Residues aspartate 128–aspartate 152 are compositionally biased toward basic and acidic residues.

This sequence belongs to the SmpB family.

The protein resides in the cytoplasm. Its function is as follows. Required for rescue of stalled ribosomes mediated by trans-translation. Binds to transfer-messenger RNA (tmRNA), required for stable association of tmRNA with ribosomes. tmRNA and SmpB together mimic tRNA shape, replacing the anticodon stem-loop with SmpB. tmRNA is encoded by the ssrA gene; the 2 termini fold to resemble tRNA(Ala) and it encodes a 'tag peptide', a short internal open reading frame. During trans-translation Ala-aminoacylated tmRNA acts like a tRNA, entering the A-site of stalled ribosomes, displacing the stalled mRNA. The ribosome then switches to translate the ORF on the tmRNA; the nascent peptide is terminated with the 'tag peptide' encoded by the tmRNA and targeted for degradation. The ribosome is freed to recommence translation, which seems to be the essential function of trans-translation. This is SsrA-binding protein from Caulobacter sp. (strain K31).